The chain runs to 25 residues: Caerin-2.5 (25 aa).

In terms of tissue distribution, expressed by the skin parotoid and/or rostral glands.

It is found in the secreted. Its function is as follows. Antibacterial peptide, that adopts an alpha helical conformation which can disrupt bacterial membranes. Each caerin displays a different antimicrobial specificity. This chain is Caerin-2.5, found in Ranoidea gilleni (Centralian tree frog).